We begin with the raw amino-acid sequence, 691 residues long: Elongation factor G 2 (691 aa).

The region spanning 8–287 is the tr-type G domain; the sequence is DRYRNIGIMA…AVVDYLPSPL (280 aa). Residues 17 to 24, 85 to 89, and 139 to 142 each bind GTP; these read AHIDAGKT, DTPGH, and NKMD.

It belongs to the TRAFAC class translation factor GTPase superfamily. Classic translation factor GTPase family. EF-G/EF-2 subfamily.

Its subcellular location is the cytoplasm. In terms of biological role, catalyzes the GTP-dependent ribosomal translocation step during translation elongation. During this step, the ribosome changes from the pre-translocational (PRE) to the post-translocational (POST) state as the newly formed A-site-bound peptidyl-tRNA and P-site-bound deacylated tRNA move to the P and E sites, respectively. Catalyzes the coordinated movement of the two tRNA molecules, the mRNA and conformational changes in the ribosome. The polypeptide is Elongation factor G 2 (Myxococcus xanthus (strain DK1622)).